The chain runs to 198 residues: Recombination protein RecR (198 aa).

A C4-type zinc finger spans residues 59–74 (CSLCCNYTDHDPCPIC). The region spanning 82 to 175 (TLLCIVEQPR…KVTRIAHGLP (94 aa)) is the Toprim domain.

It belongs to the RecR family.

Functionally, may play a role in DNA repair. It seems to be involved in an RecBC-independent recombinational process of DNA repair. It may act with RecF and RecO. This chain is Recombination protein RecR, found in Desulfitobacterium hafniense (strain DSM 10664 / DCB-2).